The following is a 315-amino-acid chain: Olfactory receptor 4K3 (315 aa).

The Extracellular segment spans residues 1 to 25 (MAWSNQSAVTEFILRGLSSSLELQI). A glycan (N-linked (GlcNAc...) asparagine) is linked at Asn-5. The chain crosses the membrane as a helical span at residues 26 to 49 (FYFLFFSIVYAATVLGNLLIVVTI). Residues 50-57 (ASEPHLHS) lie on the Cytoplasmic side of the membrane. A helical transmembrane segment spans residues 58–79 (PMYFLLGNLSFIDMSLASFATP). At 80–100 (KMIADFLREHKAISFEGCMTQ) the chain is on the extracellular side. Residues Cys-97 and Cys-189 are joined by a disulfide bond. The chain crosses the membrane as a helical span at residues 101-120 (MFFLHLLGGAEIVLLISMSF). Over 121–139 (DRYVAICKPLHYLTIMSRR) the chain is Cytoplasmic. The helical transmembrane segment at 140-158 (MCVGLVILSWIVGIFHALS) threads the bilayer. Residues 159–195 (QLAFTVNLPFCGPNEVDSFFCDLPLVIKLACVDTYIL) lie on the Extracellular side of the membrane. The helical transmembrane segment at 196 to 219 (GVFMISTSGMIALVCFILLVISYT) threads the bilayer. Residues 220–235 (IILVTVRQRSSGGSSK) are Cytoplasmic-facing. Residues 236–258 (ALSTCSAHFTVVTLFFGPCTFIY) form a helical membrane-spanning segment. Residues 259–269 (VWPFTNFPIDK) lie on the Extracellular side of the membrane. Residues 270-289 (VLSVFYTIYTPLLNPVIYTV) form a helical membrane-spanning segment. Residues 290–315 (RNKDVKYSMRKLSSHIFKSRKTDHTP) are Cytoplasmic-facing.

Belongs to the G-protein coupled receptor 1 family.

The protein localises to the cell membrane. Functionally, odorant receptor. In Homo sapiens (Human), this protein is Olfactory receptor 4K3 (OR4K3).